The sequence spans 1371 residues: uncharacterized protein (1371 aa).

The interval 1020-1048 (WYLSSSKNTPEPRPDPEPTPEGHDNNLRP) is disordered. Basic and acidic residues predominate over residues 1029–1046 (PEPRPDPEPTPEGHDNNL). One can recognise an Autotransporter domain in the interval 1083–1371 (GEPKATSMWM…SAMLGVKYTF (289 aa)).

Its subcellular location is the cell outer membrane. This is an uncharacterized protein from Escherichia coli (strain K12).